Consider the following 213-residue polypeptide: Phosphatidylserine decarboxylase proenzyme (213 aa).

The active-site Schiff-base intermediate with substrate; via pyruvic acid is Ser183. Position 183 is a pyruvic acid (Ser); by autocatalysis (Ser183).

The protein belongs to the phosphatidylserine decarboxylase family. PSD-A subfamily. Heterodimer of a large membrane-associated beta subunit and a small pyruvoyl-containing alpha subunit. The cofactor is pyruvate. Post-translationally, is synthesized initially as an inactive proenzyme. Formation of the active enzyme involves a self-maturation process in which the active site pyruvoyl group is generated from an internal serine residue via an autocatalytic post-translational modification. Two non-identical subunits are generated from the proenzyme in this reaction, and the pyruvate is formed at the N-terminus of the alpha chain, which is derived from the carboxyl end of the proenzyme. The post-translation cleavage follows an unusual pathway, termed non-hydrolytic serinolysis, in which the side chain hydroxyl group of the serine supplies its oxygen atom to form the C-terminus of the beta chain, while the remainder of the serine residue undergoes an oxidative deamination to produce ammonia and the pyruvoyl prosthetic group on the alpha chain.

It localises to the cell membrane. It catalyses the reaction a 1,2-diacyl-sn-glycero-3-phospho-L-serine + H(+) = a 1,2-diacyl-sn-glycero-3-phosphoethanolamine + CO2. The protein operates within phospholipid metabolism; phosphatidylethanolamine biosynthesis; phosphatidylethanolamine from CDP-diacylglycerol: step 2/2. In terms of biological role, catalyzes the formation of phosphatidylethanolamine (PtdEtn) from phosphatidylserine (PtdSer). The chain is Phosphatidylserine decarboxylase proenzyme from Syntrophus aciditrophicus (strain SB).